The primary structure comprises 533 residues: Acetone monooxygenase (methyl acetate-forming) (533 aa).

Residues threonine 43–tryptophan 46, aspartate 55–serine 56, and tyrosine 61 each bind FAD. Residue arginine 53 to aspartate 55 coordinates NADP(+). NADP(+) is bound by residues asparagine 183–glutamine 189, arginine 206–threonine 207, and tryptophan 492.

The protein belongs to the FAD-binding monooxygenase family. Homotetramer. FAD is required as a cofactor.

The enzyme catalyses acetone + NADPH + O2 + H(+) = methyl acetate + NADP(+) + H2O. Plays an important role in the metabolism of acetone derived from propane oxidation. Catalyzes the oxidation of acetone to methyl acetate. Exhibits high catalytic efficiency towards various linear and cyclic ketones, such as butanone, 2-pentanone, 2-heptanone, 2-octanone, 2-nonanone, 2-decanone, cyclobutanone, cyclopentanone and cyclohexanone. Elicits the highest catalytic efficiency towards butanone and cyclobutanone. Is highly specific for NADPH and cannot use NADH. This chain is Acetone monooxygenase (methyl acetate-forming), found in Gordonia sp. (strain TY-5).